Reading from the N-terminus, the 566-residue chain is DNA helicase/primase (566 aa).

Zn(2+) contacts are provided by Cys-17, Cys-20, Cys-36, and Cys-39. Residues 17–39 form a C4-like; zinc ribbon fold zinc finger; that stretch reads CDNCGSSDGNSLFSDGHTFCYVC. The Toprim domain occupies 151–238; it reads KKIVVTEGEI…RVAVLPCKDA (88 aa). Positions 157, 207, and 237 each coordinate Mg(2+). Residues 281-548 enclose the SF4 helicase domain; that stretch reads SEESVGLLFS…TGWLEPSSYS (268 aa). 312–319 lines the ATP pocket; sequence SGSGMGKS. The tract at residues 543–566 is disordered; sequence EPSSYSGEEESHSESTDWSNDTDF. The interval 550-566 is binding to viral DNA polymerase; it reads EEESHSESTDWSNDTDF.

It belongs to the Teseptimavirus DNA helicase/primase family. Homohexamer. Assembles as a hexamer onto linear or circular ssDNA in the presence of ATP or dTTP. Present in a mixture of heptamers and hexamers in the absence of DNA. Interacts (via C-terminus) with the viral DNA polymerase that is bound to DNA; this interaction is essential to initiate leading-strand DNA synthesis. The priming complex consists of 2 DNA polymerases and 1 helicase-primase hexamer that assemble on the DNA template. Interacts with the single-stranded DNA-binding protein. Part of the replicase complex that includes the DNA polymerase, thioredoxin, the primase/helicase and the single-stranded DNA binding protein. Mg(2+) serves as cofactor.

The enzyme catalyses ATP + H2O = ADP + phosphate + H(+). Functionally, ATP-dependent DNA helicase and primase essential for viral DNA replication and recombination. The helicase moves 5' -&gt; 3' on the lagging strand template, unwinding the DNA duplex ahead of the leading strand polymerase at the replication fork and generating ssDNA for both leading and lagging strand synthesis. ATP or dTTP hydrolysis propels each helicase domain to translocate 2 nt per step sequentially along DNA. Mediates strand transfer when a joint molecule is available and participates in recombinational DNA repair through its role in strand exchange. Primase activity synthesizes short RNA primers at the sequence 5'-GTC-3' on the lagging strand that the polymerase elongates using dNTPs and providing the primase is still present. This chain is DNA helicase/primase, found in Escherichia phage T7 (Bacteriophage T7).